The following is a 153-amino-acid chain: MGRQRRCRWAQPWTLLLLLLGPRLLVTHGWRRKGDKNSENTNILELYLPAVVEYALHVYNMRSQDMNAYKVVRVLRSWLELSEQKEEKGLVFSMELQFARTRCGKFDEDIDNCPFQATPDVNNTITCFFTVDTEPWKTEFQLLNDTCLEGSAE.

An N-terminal signal peptide occupies residues 1-27 (MGRQRRCRWAQPWTLLLLLLGPRLLVT).

The protein belongs to the cystatin family.

The protein localises to the secreted. Its function is as follows. May play a role in hematopoietic differentiation or inflammation. This chain is Cystatin-9 (CST9), found in Bos taurus (Bovine).